The chain runs to 297 residues: 32 kDa beta-galactoside-binding lectin lec-3 (297 aa).

2 Galectin domains span residues 11–142 (YRSK…VQWG) and 151–290 (ESGI…IQVV). 224-230 (WGNEERE) contributes to the a beta-D-galactoside binding site.

Its function is as follows. Binds galactose. The sequence is that of 32 kDa beta-galactoside-binding lectin lec-3 (lec-3) from Caenorhabditis elegans.